Consider the following 613-residue polypeptide: MPKLRSATTTHGRNMAGARALWRATGMTDQDFGKPIIAVVNSFTQFVPGHVHLKDLGQLVAREIEAAGGVAKEFNTIAVDDGIAMGHGGMLYSLPSRELIADSVEYMVNAHCADAMVCISNCDKITPGMLMAALRINIPVIFVSGGPMEAGKTKLSDQIIKLDLVDAMIQGADPKVSDAQSEQVERSACPTCGSCSGMFTANSMNCLTEALGLSQPGNGSLLATHSDREQLFKLAGQRIVTLAKRWYEQDDASALPRNIATKAAFENAMALDIAMGGSTNTVLHLLAAAQEAGVDFTMADIDRMSRKVPQLCKVAPSTQKYHMEDVHRAGGVVAILGQLEKAGLVHGDTRNVLGTSLVELLAEYDVSRQPSQEVVDFYRAGPAGIRTTKAFSQDCRWPELDLDRAEGCIRSLDNAYSLEGGLAVLAGNLALNGAIVKTAGVDEENLTFRGPARVFESQDTAVAGILDGTVKAGEVVVIRYEGPKGGPGMQEMLYPTTYLKSMGLGKACALITDGRFSGGTSGLSIGHVSPEAASGGTIGLVEDGDIINIDIPARSMVLEVADSVLAARRVAVEARGWKPLDRQRQVSFALRAYAMFATSADKGAVRDRSMLGE.

D81 contributes to the Mg(2+) binding site. C122 contacts [2Fe-2S] cluster. Residues D123 and K124 each coordinate Mg(2+). The residue at position 124 (K124) is an N6-carboxylysine. C195 contacts [2Fe-2S] cluster. E491 provides a ligand contact to Mg(2+). Residue S517 is the Proton acceptor of the active site.

The protein belongs to the IlvD/Edd family. As to quaternary structure, homodimer. The cofactor is [2Fe-2S] cluster. Mg(2+) serves as cofactor.

It catalyses the reaction (2R)-2,3-dihydroxy-3-methylbutanoate = 3-methyl-2-oxobutanoate + H2O. The catalysed reaction is (2R,3R)-2,3-dihydroxy-3-methylpentanoate = (S)-3-methyl-2-oxopentanoate + H2O. It participates in amino-acid biosynthesis; L-isoleucine biosynthesis; L-isoleucine from 2-oxobutanoate: step 3/4. Its pathway is amino-acid biosynthesis; L-valine biosynthesis; L-valine from pyruvate: step 3/4. Its function is as follows. Functions in the biosynthesis of branched-chain amino acids. Catalyzes the dehydration of (2R,3R)-2,3-dihydroxy-3-methylpentanoate (2,3-dihydroxy-3-methylvalerate) into 2-oxo-3-methylpentanoate (2-oxo-3-methylvalerate) and of (2R)-2,3-dihydroxy-3-methylbutanoate (2,3-dihydroxyisovalerate) into 2-oxo-3-methylbutanoate (2-oxoisovalerate), the penultimate precursor to L-isoleucine and L-valine, respectively. The chain is Dihydroxy-acid dehydratase from Aeromonas hydrophila subsp. hydrophila (strain ATCC 7966 / DSM 30187 / BCRC 13018 / CCUG 14551 / JCM 1027 / KCTC 2358 / NCIMB 9240 / NCTC 8049).